Reading from the N-terminus, the 324-residue chain is Glyoxylate/hydroxypyruvate reductase B (324 aa).

Catalysis depends on residues Arg237 and Glu266. Catalysis depends on His285, which acts as the Proton donor.

This sequence belongs to the D-isomer specific 2-hydroxyacid dehydrogenase family. GhrB subfamily. As to quaternary structure, homodimer.

It localises to the cytoplasm. It catalyses the reaction glycolate + NADP(+) = glyoxylate + NADPH + H(+). The enzyme catalyses (R)-glycerate + NAD(+) = 3-hydroxypyruvate + NADH + H(+). The catalysed reaction is (R)-glycerate + NADP(+) = 3-hydroxypyruvate + NADPH + H(+). In terms of biological role, catalyzes the NADPH-dependent reduction of glyoxylate and hydroxypyruvate into glycolate and glycerate, respectively. The chain is Glyoxylate/hydroxypyruvate reductase B from Shigella sonnei (strain Ss046).